The chain runs to 239 residues: Proteasome activator complex subunit 2 (239 aa).

Ala-2 is modified (N-acetylalanine). Ser-10 is subject to Phosphoserine. Positions 65 to 86 (DIPIPDPPPKDDEMETDKQEKK) are disordered. Positions 72-86 (PPKDDEMETDKQEKK) are enriched in basic and acidic residues.

This sequence belongs to the PA28 family. In terms of assembly, heterodimer of PSME1 and PSME2, which forms a hexameric ring.

Implicated in immunoproteasome assembly and required for efficient antigen processing. The PA28 activator complex enhances the generation of class I binding peptides by altering the cleavage pattern of the proteasome. The chain is Proteasome activator complex subunit 2 (PSME2) from Sus scrofa (Pig).